A 361-amino-acid polypeptide reads, in one-letter code: 3-dehydroquinate synthase (361 aa).

NAD(+) is bound by residues 106–110 (GVVGD), 130–131 (TT), Lys143, and Lys152. Zn(2+) contacts are provided by Glu185, His248, and His265.

It belongs to the sugar phosphate cyclases superfamily. Dehydroquinate synthase family. The cofactor is NAD(+). Requires Co(2+) as cofactor. Zn(2+) serves as cofactor.

It localises to the cytoplasm. It carries out the reaction 7-phospho-2-dehydro-3-deoxy-D-arabino-heptonate = 3-dehydroquinate + phosphate. It participates in metabolic intermediate biosynthesis; chorismate biosynthesis; chorismate from D-erythrose 4-phosphate and phosphoenolpyruvate: step 2/7. Catalyzes the conversion of 3-deoxy-D-arabino-heptulosonate 7-phosphate (DAHP) to dehydroquinate (DHQ). This chain is 3-dehydroquinate synthase, found in Leptospira interrogans serogroup Icterohaemorrhagiae serovar copenhageni (strain Fiocruz L1-130).